Here is a 209-residue protein sequence, read N- to C-terminus: Chloramphenicol acetyltransferase (209 aa).

H189 functions as the Proton acceptor in the catalytic mechanism.

Belongs to the chloramphenicol acetyltransferase family. Homotrimer.

The enzyme catalyses chloramphenicol + acetyl-CoA = chloramphenicol 3-acetate + CoA. Its function is as follows. This enzyme is an effector of chloramphenicol resistance in bacteria. The sequence is that of Chloramphenicol acetyltransferase from Staphylococcus aureus.